The sequence spans 416 residues: Ribulose bisphosphate carboxylase large chain (416 aa).

Asn-100 and Thr-150 together coordinate substrate. Catalysis depends on Lys-152, which acts as the Proton acceptor. Lys-154 lines the substrate pocket. Mg(2+) is bound by residues Lys-178, Asp-180, and Glu-181. The residue at position 178 (Lys-178) is an N6-carboxylysine. His-271 (proton acceptor) is an active-site residue. Positions 272, 304, and 356 each coordinate substrate.

The protein belongs to the RuBisCO large chain family. Type I subfamily. As to quaternary structure, heterohexadecamer of 8 large chains and 8 small chains; disulfide-linked. The disulfide link is formed within the large subunit homodimers. Mg(2+) is required as a cofactor. In terms of processing, the disulfide bond which can form in the large chain dimeric partners within the hexadecamer appears to be associated with oxidative stress and protein turnover.

Its subcellular location is the plastid. The protein localises to the chloroplast. It catalyses the reaction 2 (2R)-3-phosphoglycerate + 2 H(+) = D-ribulose 1,5-bisphosphate + CO2 + H2O. The catalysed reaction is D-ribulose 1,5-bisphosphate + O2 = 2-phosphoglycolate + (2R)-3-phosphoglycerate + 2 H(+). Functionally, ruBisCO catalyzes two reactions: the carboxylation of D-ribulose 1,5-bisphosphate, the primary event in carbon dioxide fixation, as well as the oxidative fragmentation of the pentose substrate in the photorespiration process. Both reactions occur simultaneously and in competition at the same active site. The protein is Ribulose bisphosphate carboxylase large chain (rbcL) of Cheiropleuria bicuspis (Fern).